The sequence spans 1202 residues: Probable DNA polymerase (1202 aa).

Belongs to the DNA polymerase type-B family.

The protein resides in the mitochondrion. The catalysed reaction is DNA(n) + a 2'-deoxyribonucleoside 5'-triphosphate = DNA(n+1) + diphosphate. The polypeptide is Probable DNA polymerase (Ascobolus immersus).